Consider the following 1134-residue polypeptide: DNA polymerase II large subunit (1134 aa).

The protein belongs to the archaeal DNA polymerase II family. Heterodimer of a large subunit and a small subunit.

The enzyme catalyses DNA(n) + a 2'-deoxyribonucleoside 5'-triphosphate = DNA(n+1) + diphosphate. It carries out the reaction Exonucleolytic cleavage in the 3'- to 5'-direction to yield nucleoside 5'-phosphates.. Its function is as follows. Possesses two activities: a DNA synthesis (polymerase) and an exonucleolytic activity that degrades single-stranded DNA in the 3'- to 5'-direction. Has a template-primer preference which is characteristic of a replicative DNA polymerase. The chain is DNA polymerase II large subunit from Methanocella arvoryzae (strain DSM 22066 / NBRC 105507 / MRE50).